The primary structure comprises 246 residues: Large ribosomal subunit protein uL3 (246 aa).

Q151 is subject to N5-methylglutamine.

The protein belongs to the universal ribosomal protein uL3 family. In terms of assembly, part of the 50S ribosomal subunit. Forms a cluster with proteins L14 and L19. Methylated by PrmB.

In terms of biological role, one of the primary rRNA binding proteins, it binds directly near the 3'-end of the 23S rRNA, where it nucleates assembly of the 50S subunit. This Bartonella quintana (strain Toulouse) (Rochalimaea quintana) protein is Large ribosomal subunit protein uL3.